Consider the following 446-residue polypeptide: Glycerol-3-phosphate acyltransferase 3 (446 aa).

Transmembrane regions (helical) follow at residues Ile11 to Ser31, Leu146 to Leu166, and Ile168 to Leu188. The short motif at His236 to Asp241 is the HXXXXD motif element.

The protein belongs to the 1-acyl-sn-glycerol-3-phosphate acyltransferase family.

It is found in the endoplasmic reticulum membrane. It carries out the reaction sn-glycerol 3-phosphate + an acyl-CoA = a 1-acyl-sn-glycero-3-phosphate + CoA. The catalysed reaction is a 1-acyl-sn-glycero-3-phosphate + an acyl-CoA = a 1,2-diacyl-sn-glycero-3-phosphate + CoA. It catalyses the reaction dodecanoyl-CoA + sn-glycerol 3-phosphate = 1-dodecanoyl-sn-glycerol 3-phosphate + CoA. The enzyme catalyses sn-glycerol 3-phosphate + hexadecanoyl-CoA = 1-hexadecanoyl-sn-glycero-3-phosphate + CoA. It carries out the reaction sn-glycerol 3-phosphate + (9Z)-octadecenoyl-CoA = 1-(9Z-octadecenoyl)-sn-glycero-3-phosphate + CoA. The catalysed reaction is (9Z,12Z)-octadecadienoyl-CoA + sn-glycerol 3-phosphate = 1-(9Z,12Z)-octadecadienoyl-sn-glycero-3-phosphate + CoA. It catalyses the reaction 1-tetradecanoyl-sn-glycerol 3-phosphate + (9Z)-octadecenoyl-CoA = 1-tetradecanoyl-2-(9Z)-octadecenoyl-sn-glycero-3-phosphate + CoA. The enzyme catalyses 1-hexadecanoyl-sn-glycero-3-phosphate + (9Z)-octadecenoyl-CoA = 1-hexadecanoyl-2-(9Z-octadecenoyl)-sn-glycero-3-phosphate + CoA. It carries out the reaction 1-(9Z-octadecenoyl)-sn-glycero-3-phosphate + (9Z)-octadecenoyl-CoA = 1,2-di-(9Z-octadecenoyl)-sn-glycero-3-phosphate + CoA. The catalysed reaction is 1-(6Z,9Z,12Z-octadecatrienoyl)-sn-glycero-3-phosphate + (9Z)-octadecenoyl-CoA = (6Z,9Z,12Z)-octadecatrienoyl-2-(9Z)-octadecenoyl-sn-glycero-3-phosphate + CoA. It catalyses the reaction 1-(9Z,12Z,15Z)-octadecatrienoyl-sn-glycero-3-phosphate + (9Z)-octadecenoyl-CoA = 1-(9Z,12Z,15Z)-octadecatrienoyl-2-(9Z)-octadecenoyl-sn-glycero-3-phosphate + CoA. The enzyme catalyses 1-(9Z-octadecenoyl)-sn-glycero-3-phosphate + tetradecanoyl-CoA = 1-(9Z)-octadecenoyl-2-tetradecanoyl-sn-glycero-3-phosphate + CoA. It carries out the reaction 1-(9Z-octadecenoyl)-sn-glycero-3-phosphate + hexadecanoyl-CoA = 1-(9Z)-octadecenoyl-2-hexadecanoyl-sn-glycero-3-phosphate + CoA. The catalysed reaction is 1-(9Z-octadecenoyl)-sn-glycero-3-phosphate + octadecanoyl-CoA = 1-(9Z-octadecenoyl)-2-octadecanoyl-sn-glycero-3-phosphate + CoA. It catalyses the reaction 1-(9Z-octadecenoyl)-sn-glycero-3-phosphate + (9Z,12Z)-octadecadienoyl-CoA = 1-(9Z)-octadecenoyl-2-(9Z,12Z)-octadecadienoyl-sn-glycero-3-phosphate + CoA. The enzyme catalyses 1-(5Z,8Z,11Z,14Z-eicosatetraenoyl)-sn-glycero-3-phosphate + (9Z)-octadecenoyl-CoA = 1-(5Z,8Z,11Z,14Z)-eicosatetraenoyl-2-(9Z)-octadecenoyl-sn-glycero-3-phosphate + CoA. Its pathway is glycerolipid metabolism; triacylglycerol biosynthesis. It functions in the pathway phospholipid metabolism; CDP-diacylglycerol biosynthesis; CDP-diacylglycerol from sn-glycerol 3-phosphate: step 1/3. Functionally, converts glycerol-3-phosphate to 1-acyl-sn-glycerol-3-phosphate (lysophosphatidic acid or LPA) by incorporating an acyl moiety at the sn-1 position of the glycerol backbone. Also converts LPA into 1,2-diacyl-sn-glycerol-3-phosphate (phosphatidic acid or PA) by incorporating an acyl moiety at the sn-2 position of the glycerol backbone. Protects cells against lipotoxicity. The chain is Glycerol-3-phosphate acyltransferase 3 from Xenopus laevis (African clawed frog).